Reading from the N-terminus, the 305-residue chain is Mas-related G-protein coupled receptor member A2B (305 aa).

The Extracellular segment spans residues 1–17; the sequence is MDETLPGSINIRILIPK. Residues 18–38 traverse the membrane as a helical segment; the sequence is LMIIIFGLVGLMGNAIVFWLL. Residues 39-53 are Cytoplasmic-facing; sequence GFHLRRNAFSVYILN. The chain crosses the membrane as a helical span at residues 54–74; the sequence is LALADFLFLLSSIIASTLFLL. Topologically, residues 75–78 are extracellular; the sequence is KVSY. A helical membrane pass occupies residues 79–99; sequence LSIIFHLCFNTIMMVVYITGI. Residues 100–132 are Cytoplasmic-facing; that stretch reads SMLSAISTECCLSVLCPTWYRCHRPVHTSTVMC. Residues 133–153 traverse the membrane as a helical segment; sequence AVIWVLSLLICILNSYFCAVL. Topologically, residues 154-167 are extracellular; that stretch reads HTRYDNDNECLATN. The chain crosses the membrane as a helical span at residues 168-188; sequence IFTASYMIFLLVVLCLSSLAL. Over 189 to 207 the chain is Cytoplasmic; sequence LARLFCGAGQMKLTRFHVT. The helical transmembrane segment at 208–228 threads the bilayer; sequence ILLTLLVFLLCGLPFVIYCIL. The Extracellular segment spans residues 229–244; that stretch reads LFKIKDDFHVLDVNFY. A helical membrane pass occupies residues 245-265; that stretch reads LALEVLTAINSCANPIIYFFV. The Cytoplasmic portion of the chain corresponds to 266–305; that stretch reads GSFRHQLKHQTLKMVLQSALQDTPETAENMVEMSSNKAEP.

It belongs to the G-protein coupled receptor 1 family. Mas subfamily. As to expression, expressed in a subset of sensory neurons that includes nociceptors. Expressed in the subclass of non-peptidergic sensory neurons that are IB4(+) and VR1(-).

Its subcellular location is the cell membrane. Functionally, orphan receptor. May be a receptor for RFamide-family neuropeptides such as NPFF and NPAF, which are analgesic in vivo. May regulate nociceptor function and/or development, including the sensation or modulation of pain. This Mus musculus (Mouse) protein is Mas-related G-protein coupled receptor member A2B.